The following is a 459-amino-acid chain: ATP-dependent RNA helicase me31b (459 aa).

Positions Met-1–Leu-267 are recA-like domain 1. Residues Ser-8 and Ser-29 each carry the phosphoserine modification. The short motif at Asn-58–Glu-86 is the Q motif element. The 171-residue stretch at Ile-89–Ile-259 folds into the Helicase ATP-binding domain. ATP is bound at residue Ala-102–Thr-109. The short motif at Asp-207–Asp-210 is the DEAD box element. A gyf binding region spans residues Glu-264–Val-431. One can recognise a Helicase C-terminal domain in the interval Gly-269 to Leu-429. Positions Ala-432–Lys-459 are recA-like domain 2. Ser-450 carries the phosphoserine modification.

The protein belongs to the DEAD box helicase family. DDX6/DHH1 subfamily. In terms of assembly, conserved component of different types of multiprotein ribonucleoprotein complexes (RNPs) that form distinct germ granules (P-body, nuage, sponge body or polar granules) and P-body-like neuronal RNPs. Consequently it interacts with a wide variety of proteins, some of which appear to be common interactive partners in almost all RNPs types i.e. cup and tral, whereas other interactions are specific to a germ granule/RNP. Core functional components in me31B-containing RNPs include RNA regulatory proteins (such as translational repressor, RNA-decapping and exonuclease proteins), RNA localization proteins and additional proteins depending on the biological context of the RNPs. In the P-body RNPs, interacts with at least the translation repressor proteins tral, cup and Edc3, and the mRNA localization factor yps. Interaction with tral or Edc3 is required for translation repression and possibly RNA decapping; binding to tral and Edc3 is mutually exclusive. In the nuage and germ plasm polar granule RNPs, interacts with at least tral, cup, and additional proteins required for assembly and function of the germ granules such as tud, vas and aub. Interacts (when dimethylated on Arg residues) with tud; interaction is RNA-independent. Component of the osk RNP complex, which is composed of at least me31B, exu, yps, aret/bruno, cup, and the mRNA of osk. Component of the nanos RNP complex, which is composed of at least smg, cup, tral, me31B, the CCR4-NOT complex members Rga/NOT2 and Caf1-55, and the mRNA of nanos (nos). Interacts with tral and piRNA pathway components papi and AGO3; promotes interaction between nuage RNPs and the piRNA-mediated transposon silencing. Forms a RNP containing at least me31B, eIF4E1, cup, tral and pAbp; this interaction is required for the translational silencing of maternal mRNAs during the maternal-to-zygotic transition. In the sponge body, forms a RNP containing at least me31B, exu, yps and the mRNA of osk; interactions with exu and yps are RNA dependent. Component of a neuronal RNP, at least composed of me31B, tral and Fmr1. Component of the Atx2-Not1 repressor complex, composed of at least me31B, Atx2, tyf and pAbp. Interacts (via the C-terminus) with Atx2, tyf, pAbp and Lsm12a. Interacts (via RecA-like domain 2) with 4EHP-GYF2 complex member Gyf (via the me31B binding motif). Interacts with 4E-T, Edc3 and Patr-1. Symmetrically dimethylated on arginine residues. Ubiquitously expressed throughout the brain (at protein level). Expressed in the olfactory system including the antennal lobes, projection neurons, local interneurons, mushroom-body Kenyon cells and glial cells (at protein level).

The protein localises to the cytoplasm. It is found in the cytoplasmic ribonucleoprotein granule. The protein resides in the P-body. Its subcellular location is the endoplasmic reticulum. It localises to the cell projection. The protein localises to the dendrite. The enzyme catalyses ATP + H2O = ADP + phosphate + H(+). ATP-dependent RNA helicase which is a core component of a variety of ribonucleoprotein complexes (RNPs) that play critical roles in translational repression and mRNA decapping during embryogenesis, oogenesis, neurogenesis and neurotransmission. Recruits core components and translational repressors to some RNP complexes, and mediates RNP aggregation into processing granules such as P-bodies. As part of a RNP complex containing tral, eIF4E1, cup, and pAbp, involved in RNP-mediated translational repression of maternal mRNAs during oogenesis and embryogenesis. As part of a RNP complex containing tral and the RNA localization factors exu and yps, mediates translational silencing of mRNAs such as osk/oskar and bcd/bicoid during their transport to the oocyte in order to prevent their translation until they reach their positional destinations. In neurons and possibly imaginal disks, involved in miRNA-mediated translational repression, possibly in association with components of the piRNA transposon silencing pathway. Involved in RNA localization and protein trafficking in the oocyte. As part of an ER-associated RNP containing tral, cup and yps, required for tral-dependent ER exit site formation and consequently efficient trafficking of proteins such as grk and yl through the secretory pathway. Component of neuron RNPs that mediate transport and translation of neuronal RNAs, including translation repression of synaptic transcripts in preparation for their dendritic targeting. As part of the Atx2-Not1 repressor complex promotes Not1-dependent post-transcriptional gene silencing in adult circadian pacemaker neurons in order to sustain high-amplitude circadian rhythms and Pdf cycling in a per-independent manner. Promotes the interaction between Atx2 and Not1 within the Atx2-Not1 RNP complex. Recruited to the 4EHP-GYF2 complex by Gyf, where it plays a role in 4EHP-GYF2 mediated translational repression and mRNA decay. In Drosophila melanogaster (Fruit fly), this protein is ATP-dependent RNA helicase me31b (me31B).